A 272-amino-acid chain; its full sequence is tRNA uridine(34) hydroxylase (272 aa).

In terms of domain architecture, Rhodanese spans 121 to 217 (SRSDVYTIDT…YFKSTGNINN (97 aa)). The Cysteine persulfide intermediate role is filled by Cys-177.

This sequence belongs to the TrhO family.

It catalyses the reaction uridine(34) in tRNA + AH2 + O2 = 5-hydroxyuridine(34) in tRNA + A + H2O. Catalyzes oxygen-dependent 5-hydroxyuridine (ho5U) modification at position 34 in tRNAs. This Ehrlichia ruminantium (strain Welgevonden) protein is tRNA uridine(34) hydroxylase.